A 294-amino-acid polypeptide reads, in one-letter code: NAD kinase (294 aa).

Aspartate 74 acts as the Proton acceptor in catalysis. NAD(+)-binding positions include 74–75 (DG), arginine 79, 149–150 (NE), aspartate 179, 190–195 (TGYSMS), and alanine 214.

This sequence belongs to the NAD kinase family. A divalent metal cation serves as cofactor.

It localises to the cytoplasm. It carries out the reaction NAD(+) + ATP = ADP + NADP(+) + H(+). Involved in the regulation of the intracellular balance of NAD and NADP, and is a key enzyme in the biosynthesis of NADP. Catalyzes specifically the phosphorylation on 2'-hydroxyl of the adenosine moiety of NAD to yield NADP. The polypeptide is NAD kinase (Flavobacterium psychrophilum (strain ATCC 49511 / DSM 21280 / CIP 103535 / JIP02/86)).